We begin with the raw amino-acid sequence, 239 residues long: Tumor necrosis factor ligand superfamily member 8 (239 aa).

Residues 1–36 form a disordered region; that stretch reads MEPGLQQAGSCGAPSPDPAMQVQPGSVASPWRSTRP. Topologically, residues 1 to 43 are cytoplasmic; it reads MEPGLQQAGSCGAPSPDPAMQVQPGSVASPWRSTRPWRSTSRS. The helical; Signal-anchor for type II membrane protein transmembrane segment at 44–67 threads the bilayer; sequence YFYLSTTALVCLVVAVAIILVLVV. Topologically, residues 68–239 are extracellular; it reads QKKDSTPNTT…LSVFLYSSSD (172 aa). Residues N75, N86, N114, N158, N194, and N206 are each glycosylated (N-linked (GlcNAc...) asparagine). A THD domain is found at 103-230; sequence SWAYLQVSKH…TNTFPLDNVL (128 aa). C156 and C182 are oxidised to a cystine.

This sequence belongs to the tumor necrosis factor family. In terms of assembly, homotrimer.

It localises to the membrane. Its function is as follows. Cytokine that binds to TNFRSF8/CD30. Induces proliferation of T-cells. The chain is Tumor necrosis factor ligand superfamily member 8 (Tnfsf8) from Mus musculus (Mouse).